A 399-amino-acid chain; its full sequence is 5'-C-glycyluridine monooxygenase-decarboxylase (399 aa).

Position 179 (Thr179) interacts with phosphate. Lys230 is modified (N6-(pyridoxal phosphate)lysine). Phosphate is bound by residues Arg318, Arg322, Arg353, and Arg367.

Belongs to the SelA family. As to quaternary structure, homooctamer; tetramer of homodimers. The cofactor is pyridoxal 5'-phosphate.

The enzyme catalyses (5'S,6'R)-C-glycyluridine + O2 = uridine-5'-carboxamide + CO2 + H2O. The protein operates within antibiotic biosynthesis. Activity is dependent on phosphate. Monooxygenase-decarboxylase involved in the biosynthesis of the capuramycin-type nucleoside antibiotic A-503083. Catalyzes the oxidative decarboxylation of 5'-C-glycyluridine (GlyU) to uridine-5'-carboxamide (CarU). Is stereospecific for the (5'S,6'R)-diastereomer of GlyU. Directly incorporates a single oxygen atom from O(2) into the product CarU. The sequence is that of 5'-C-glycyluridine monooxygenase-decarboxylase from Streptomyces sp.